The primary structure comprises 457 residues: Hydrogenobyrinate a,c-diamide synthase (457 aa).

Positions threonine 255–glycine 441 constitute a GATase cobBQ-type domain. Cysteine 337 functions as the Nucleophile in the catalytic mechanism.

The protein belongs to the CobB/CbiA family. It depends on Mg(2+) as a cofactor.

The catalysed reaction is hydrogenobyrinate + 2 L-glutamine + 2 ATP + 2 H2O = hydrogenobyrinate a,c-diamide + 2 L-glutamate + 2 ADP + 2 phosphate + 2 H(+). It functions in the pathway cofactor biosynthesis; adenosylcobalamin biosynthesis; cob(II)yrinate a,c-diamide from precorrin-2 (aerobic route): step 9/10. Its function is as follows. Catalyzes the ATP-dependent amidation of the two carboxylate groups at positions a and c of hydrogenobyrinate, using either L-glutamine or ammonia as the nitrogen source. The protein is Hydrogenobyrinate a,c-diamide synthase of Mycobacterium bovis (strain ATCC BAA-935 / AF2122/97).